Here is a 375-residue protein sequence, read N- to C-terminus: Putative glutamate--cysteine ligase 2 (375 aa).

It belongs to the glutamate--cysteine ligase type 2 family. YbdK subfamily.

It catalyses the reaction L-cysteine + L-glutamate + ATP = gamma-L-glutamyl-L-cysteine + ADP + phosphate + H(+). In terms of biological role, ATP-dependent carboxylate-amine ligase which exhibits weak glutamate--cysteine ligase activity. The chain is Putative glutamate--cysteine ligase 2 from Azoarcus sp. (strain BH72).